The chain runs to 369 residues: UDP-3-O-acylglucosamine N-acyltransferase (369 aa).

His-263 acts as the Proton acceptor in catalysis.

Belongs to the transferase hexapeptide repeat family. LpxD subfamily. In terms of assembly, homotrimer.

The enzyme catalyses a UDP-3-O-[(3R)-3-hydroxyacyl]-alpha-D-glucosamine + a (3R)-hydroxyacyl-[ACP] = a UDP-2-N,3-O-bis[(3R)-3-hydroxyacyl]-alpha-D-glucosamine + holo-[ACP] + H(+). It functions in the pathway bacterial outer membrane biogenesis; LPS lipid A biosynthesis. Its function is as follows. Catalyzes the N-acylation of UDP-3-O-acylglucosamine using 3-hydroxyacyl-ACP as the acyl donor. Is involved in the biosynthesis of lipid A, a phosphorylated glycolipid that anchors the lipopolysaccharide to the outer membrane of the cell. This is UDP-3-O-acylglucosamine N-acyltransferase from Burkholderia vietnamiensis (strain G4 / LMG 22486) (Burkholderia cepacia (strain R1808)).